The chain runs to 210 residues: LexA repressor (210 aa).

The H-T-H motif DNA-binding region spans 30-50; it reads RVEIAREIGFKSPNAAEEHLK. Residues serine 127 and lysine 164 each act as for autocatalytic cleavage activity in the active site.

This sequence belongs to the peptidase S24 family. In terms of assembly, homodimer.

It carries out the reaction Hydrolysis of Ala-|-Gly bond in repressor LexA.. Functionally, represses a number of genes involved in the response to DNA damage (SOS response), including recA and lexA. In the presence of single-stranded DNA, RecA interacts with LexA causing an autocatalytic cleavage which disrupts the DNA-binding part of LexA, leading to derepression of the SOS regulon and eventually DNA repair. This chain is LexA repressor, found in Actinobacillus pleuropneumoniae serotype 7 (strain AP76).